The chain runs to 537 residues: MAKQLAFNDAARRSLEAGIDKLANTVKVTLGPRGRNVVLDKKWGAPTITNDGVTIAREVELDDPYENLGAQLAKEVATKTNDVAGDGTTTATVLAQALVKEGLRNVAAGAAPGEIKRGIEVSVEAVAARLLENAREVEGTQVASVAAISAQSDEVGELLAEAFGKVGKDGVITIEESSTTQTELVLTEGMQFDKGYLSPYFVTDAERQEAVLEDALILINQGKISSLQDFLPLLEKALQANKPLFIIAEDIEGEALSTLIVNRIRGTLNVVAVKAPGFGDRRKAMLQDIATLTGAQVVSPDLGLTLDTVGLEVLGTARRITVTKDNTTIVDGAGTAQDVADRVAQLRAELTRTDSDWDKEKLQERLAKLAGGIGVIKVGAATEVELKEKKHRIEDAVSSTRAALEEGIVSGGGSALIHALKALDESPAVKALEGDAAAAVGIVRRALVQPLRWIAQNAGFDGFVVVAKVSELEANHGFNAKSGEYEDLIAAGVIDPVKVTRSALRNAASIAALVLTTETLVAEKPAEEEDAHAGHQH.

ATP is bound by residues 29-32 (TLGP), 86-90 (DGTTT), Gly412, and Asp495.

This sequence belongs to the chaperonin (HSP60) family. As to quaternary structure, forms a cylinder of 14 subunits composed of two heptameric rings stacked back-to-back. Interacts with the co-chaperonin GroES.

It localises to the cytoplasm. The enzyme catalyses ATP + H2O + a folded polypeptide = ADP + phosphate + an unfolded polypeptide.. Together with its co-chaperonin GroES, plays an essential role in assisting protein folding. The GroEL-GroES system forms a nano-cage that allows encapsulation of the non-native substrate proteins and provides a physical environment optimized to promote and accelerate protein folding. The sequence is that of Chaperonin GroEL 2 from Paenarthrobacter aurescens (strain TC1).